Here is a 599-residue protein sequence, read N- to C-terminus: Sulfite reductase [NADPH] flavoprotein alpha-component (599 aa).

Residues 64–202 form the Flavodoxin-like domain; it reads VTLISASQTG…AASEWRARVV (139 aa). FMN-binding positions include 70-75, 117-120, and 153-162; these read SQTGNA, STQG, and LGDTSYEFFC. In terms of domain architecture, FAD-binding FR-type spans 234-448; that stretch reads DAPLTATLSV…IEHNDNFRLP (215 aa). Residues T322, A356, 386 to 389, 404 to 406, Y410, and 419 to 422 each bind FAD; these read RLYS, TVG, and GGAS. NADP(+) is bound by residues 519–520, 525–529, and D561; these read SR and KIYVQ. Y599 is a binding site for FAD.

This sequence belongs to the NADPH-dependent sulphite reductase flavoprotein subunit CysJ family. The protein in the N-terminal section; belongs to the flavodoxin family. It in the C-terminal section; belongs to the flavoprotein pyridine nucleotide cytochrome reductase family. As to quaternary structure, alpha(8)-beta(8). The alpha component is a flavoprotein, the beta component is a hemoprotein. It depends on FAD as a cofactor. FMN serves as cofactor.

It catalyses the reaction hydrogen sulfide + 3 NADP(+) + 3 H2O = sulfite + 3 NADPH + 4 H(+). Its pathway is sulfur metabolism; hydrogen sulfide biosynthesis; hydrogen sulfide from sulfite (NADPH route): step 1/1. Its function is as follows. Component of the sulfite reductase complex that catalyzes the 6-electron reduction of sulfite to sulfide. This is one of several activities required for the biosynthesis of L-cysteine from sulfate. The flavoprotein component catalyzes the electron flow from NADPH -&gt; FAD -&gt; FMN to the hemoprotein component. The protein is Sulfite reductase [NADPH] flavoprotein alpha-component of Salmonella paratyphi A (strain ATCC 9150 / SARB42).